We begin with the raw amino-acid sequence, 227 residues long: 2-C-methyl-D-erythritol 4-phosphate cytidylyltransferase (227 aa).

This sequence belongs to the IspD/TarI cytidylyltransferase family. IspD subfamily.

The enzyme catalyses 2-C-methyl-D-erythritol 4-phosphate + CTP + H(+) = 4-CDP-2-C-methyl-D-erythritol + diphosphate. Its pathway is isoprenoid biosynthesis; isopentenyl diphosphate biosynthesis via DXP pathway; isopentenyl diphosphate from 1-deoxy-D-xylulose 5-phosphate: step 2/6. In terms of biological role, catalyzes the formation of 4-diphosphocytidyl-2-C-methyl-D-erythritol from CTP and 2-C-methyl-D-erythritol 4-phosphate (MEP). This is 2-C-methyl-D-erythritol 4-phosphate cytidylyltransferase from Dehalococcoides mccartyi (strain CBDB1).